Reading from the N-terminus, the 555-residue chain is Exodeoxyribonuclease 7 large subunit (555 aa).

It belongs to the XseA family. In terms of assembly, heterooligomer composed of large and small subunits.

The protein resides in the cytoplasm. The enzyme catalyses Exonucleolytic cleavage in either 5'- to 3'- or 3'- to 5'-direction to yield nucleoside 5'-phosphates.. Bidirectionally degrades single-stranded DNA into large acid-insoluble oligonucleotides, which are then degraded further into small acid-soluble oligonucleotides. In Chlamydia felis (strain Fe/C-56) (Chlamydophila felis), this protein is Exodeoxyribonuclease 7 large subunit.